A 704-amino-acid chain; its full sequence is ATP-dependent zinc metalloprotease FTSH 5, chloroplastic (704 aa).

Residues 1–58 (MATTSSNPLLLSSNFLGSQIIISAPTPKTTTKSLPFSVISRKRYQISQSEKLMKSLPS) constitute a chloroplast transit peptide. Residues 59–76 (QAALAALLFSSSSPQALA) constitute a thylakoid transit peptide. The helical transmembrane segment at 193–213 (FDFIGNLLFPLLAFGGLFYLF) threads the bilayer. Residue 290–297 (GPPGTGKT) coordinates ATP. A Zn(2+)-binding site is contributed by histidine 512. Glutamate 513 is a catalytic residue. Residues histidine 516 and aspartate 593 each coordinate Zn(2+).

The protein in the N-terminal section; belongs to the AAA ATPase family. This sequence in the C-terminal section; belongs to the peptidase M41 family. In terms of assembly, heterohexamers with FTSH1, FTSH2 and FTSH8. The cofactor is Zn(2+). In terms of tissue distribution, ubiquitous.

The protein localises to the plastid. It is found in the chloroplast thylakoid membrane. In terms of biological role, part of a complex that function as an ATP-dependent zinc metallopeptidase. Involved in the thylakoid formation and in the removal of damaged D1 in the photosystem II, preventing cell death under high-intensity light conditions. Not involved in the degradation of the light-harvesting complex of photosystem II (LHC II) or in thermotolerance. The sequence is that of ATP-dependent zinc metalloprotease FTSH 5, chloroplastic (FTSH5) from Arabidopsis thaliana (Mouse-ear cress).